Consider the following 101-residue polypeptide: DNA-binding protein Fis (101 aa).

The H-T-H motif DNA-binding region spans 77-96 (QTRAANMLGINRGTLRKKLK).

It belongs to the transcriptional regulatory Fis family. In terms of assembly, homodimer.

Activates ribosomal RNA transcription. Plays a direct role in upstream activation of rRNA promoters. This chain is DNA-binding protein Fis, found in Shewanella loihica (strain ATCC BAA-1088 / PV-4).